A 189-amino-acid polypeptide reads, in one-letter code: Threonylcarbamoyl-AMP synthase (189 aa).

The 184-residue stretch at 6–189 (TAIFTPIIDA…VLTGEQIRQG (184 aa)) folds into the YrdC-like domain.

Belongs to the SUA5 family. TsaC subfamily.

It is found in the cytoplasm. The enzyme catalyses L-threonine + hydrogencarbonate + ATP = L-threonylcarbamoyladenylate + diphosphate + H2O. Functionally, required for the formation of a threonylcarbamoyl group on adenosine at position 37 (t(6)A37) in tRNAs that read codons beginning with adenine. Catalyzes the conversion of L-threonine, HCO(3)(-)/CO(2) and ATP to give threonylcarbamoyl-AMP (TC-AMP) as the acyladenylate intermediate, with the release of diphosphate. This Serratia proteamaculans (strain 568) protein is Threonylcarbamoyl-AMP synthase.